Consider the following 537-residue polypeptide: Apolipoprotein N-acyltransferase (537 aa).

Transmembrane regions (helical) follow at residues 10–30, 37–57, 76–96, 107–127, 181–201, and 210–230; these read IALAIILTWGWKRALVAITAG, LAPFNLFPVLFITFPVLVWLI, YWFGLGYFVPGLYWIGYAFFV, FAVLGLPAYLSIFTAIGFALA, IGLWGMTFLTVAIFASPATLI, and AWRAPAAAVALLIAMSIFGAI. Residues 248–501 form the CN hydrolase domain; sequence MQPNLQQDAK…EGILDASLPA (254 aa). Glutamate 295 acts as the Proton acceptor in catalysis. Lysine 360 is a catalytic residue. The active-site Nucleophile is the cysteine 413. The chain crosses the membrane as a helical span at residues 507 to 527; it reads IYARVGDVPAAVLVALAVLLA.

The protein belongs to the CN hydrolase family. Apolipoprotein N-acyltransferase subfamily.

The protein localises to the cell inner membrane. The catalysed reaction is N-terminal S-1,2-diacyl-sn-glyceryl-L-cysteinyl-[lipoprotein] + a glycerophospholipid = N-acyl-S-1,2-diacyl-sn-glyceryl-L-cysteinyl-[lipoprotein] + a 2-acyl-sn-glycero-3-phospholipid + H(+). Its pathway is protein modification; lipoprotein biosynthesis (N-acyl transfer). Functionally, catalyzes the phospholipid dependent N-acylation of the N-terminal cysteine of apolipoprotein, the last step in lipoprotein maturation. This is Apolipoprotein N-acyltransferase from Bradyrhizobium diazoefficiens (strain JCM 10833 / BCRC 13528 / IAM 13628 / NBRC 14792 / USDA 110).